A 154-amino-acid polypeptide reads, in one-letter code: Protein X (154 aa).

The interval 68-117 (PCALRFTSARRMETTVNAPGNLPKVLHKRTLGLSVMSTTDLEAYFKDCVF) is mitochondrial targeting sequence.

It belongs to the orthohepadnavirus protein X family. May form homodimer. May interact with host CEBPA, CFLAR, CREB1, DDB1, E4F1, HBXIP, HSPD1/HSP60, NFKBIA, POLR2E and SMAD4. Interacts with host SMC5-SMC6 complex and induces its degradation. Interacts with host TRPC4AP; leading to prevent ubiquitination of TRPC4AP. Interacts with host PLSCR1; this interaction promotes ubiquitination and degradation of HBx and impairs HBx-mediated cell proliferation. In terms of processing, a fraction may be phosphorylated in insect cells and HepG2 cells, a human hepatoblastoma cell line. Phosphorylated in vitro by host protein kinase C or mitogen-activated protein kinase. N-acetylated in insect cells.

It localises to the host cytoplasm. Its subcellular location is the host nucleus. It is found in the host mitochondrion. Functionally, multifunctional protein that plays a role in silencing host antiviral defenses and promoting viral transcription. Does not seem to be essential for HBV infection. May be directly involved in development of cirrhosis and liver cancer (hepatocellular carcinoma). Most of cytosolic activities involve modulation of cytosolic calcium. The effect on apoptosis is controversial depending on the cell types in which the studies have been conducted. May induce apoptosis by localizing in mitochondria and causing loss of mitochondrial membrane potential. May also modulate apoptosis by binding host CFLAR, a key regulator of the death-inducing signaling complex (DISC). Promotes viral transcription by using the host E3 ubiquitin ligase DDB1 to target the SMC5-SMC6 complex to proteasomal degradation. This host complex would otherwise bind to viral episomal DNA, and prevents its transcription. Moderately stimulates transcription of many different viral and cellular transcription elements. Promoters and enhancers stimulated by HBx contain DNA binding sites for NF-kappa-B, AP-1, AP-2, c-EBP, ATF/CREB, or the calcium-activated factor NF-AT. The polypeptide is Protein X (Hepatitis B virus genotype B2 (isolate Vietnam/16091/1992) (HBV-B)).